Reading from the N-terminus, the 107-residue chain is Probable 4-amino-4-deoxy-L-arabinose-phosphoundecaprenol flippase subunit ArnE (107 aa).

One can recognise an EamA domain in the interval R31–G105. 3 helical membrane-spanning segments follow: residues G34–L54, V57–A77, and I85–G105.

It belongs to the ArnE family. As to quaternary structure, heterodimer of ArnE and ArnF.

Its subcellular location is the cell inner membrane. The protein operates within bacterial outer membrane biogenesis; lipopolysaccharide biosynthesis. Its function is as follows. Translocates 4-amino-4-deoxy-L-arabinose-phosphoundecaprenol (alpha-L-Ara4N-phosphoundecaprenol) from the cytoplasmic to the periplasmic side of the inner membrane. The sequence is that of Probable 4-amino-4-deoxy-L-arabinose-phosphoundecaprenol flippase subunit ArnE from Enterobacter sp. (strain 638).